We begin with the raw amino-acid sequence, 173 residues long: Translation initiation factor IF-3 (173 aa).

This sequence belongs to the IF-3 family. In terms of assembly, monomer.

It localises to the cytoplasm. Functionally, IF-3 binds to the 30S ribosomal subunit and shifts the equilibrium between 70S ribosomes and their 50S and 30S subunits in favor of the free subunits, thus enhancing the availability of 30S subunits on which protein synthesis initiation begins. This is Translation initiation factor IF-3 from Aromatoleum aromaticum (strain DSM 19018 / LMG 30748 / EbN1) (Azoarcus sp. (strain EbN1)).